Consider the following 240-residue polypeptide: Arginine transport ATP-binding protein ArtM (240 aa).

In terms of domain architecture, ABC transporter spans I2–L236. G34–S41 contributes to the ATP binding site.

The protein belongs to the ABC transporter superfamily.

The protein resides in the cell membrane. Functionally, part of a binding-protein-dependent transport system for arginine. Probably responsible for energy coupling to the transport system. This Bacillus subtilis (strain 168) protein is Arginine transport ATP-binding protein ArtM (artM).